Reading from the N-terminus, the 348-residue chain is 2-heptyl-4(1H)-quinolone synthase subunit PqsC (348 aa).

The active-site Acyl-thioester intermediate is the Cys129. The active site involves His269.

Belongs to the thiolase-like superfamily. FabH family. As to quaternary structure, forms a tight complex with PqsB.

The protein localises to the cytoplasm. It catalyses the reaction (2-aminobenzoyl)acetate + octanoyl-CoA + H(+) = 2-heptyl-4(1H)-quinolone + CO2 + CoA + H2O. Its activity is regulated as follows. Folding of PqsC and binding of octanoate are promoted by PqsB. Binding of the octanoyl group probably increases the binding affinity of the complex for 2-ABA. Activity of the complex is inhibited by 2-aminoacetophenone (2-AA). Functionally, required for the biosynthesis of the quorum-sensing signaling molecules 2-heptyl-4(1H)-quinolone (HHQ) and 2-heptyl-3-hydroxy-4(1H)-quinolone (Pseudomonas quinolone signal or PQS), which are important for biofilm formation and virulence. The PqsC/PqsB complex catalyzes the condensation of 2-aminobenzoylacetate (2-ABA) and octanoyl-CoA to form HHQ. First, PqsC acquires an octanoyl group from octanoyl-CoA and forms an octanoyl-PqsC intermediate. Then, together with PqsB, it catalyzes the coupling of 2-ABA with the octanoate group, leading to decarboxylation and dehydration, and resulting in closure of the quinoline ring. In Pseudomonas aeruginosa (strain ATCC 15692 / DSM 22644 / CIP 104116 / JCM 14847 / LMG 12228 / 1C / PRS 101 / PAO1), this protein is 2-heptyl-4(1H)-quinolone synthase subunit PqsC.